We begin with the raw amino-acid sequence, 259 residues long: 4-hydroxy-tetrahydrodipicolinate reductase (259 aa).

NAD(+) contacts are provided by residues 8–13, 94–96, and 120–123; these read GFAGAM, GTT, and APNF. The active-site Proton donor/acceptor is the His-150. Residue His-151 coordinates (S)-2,3,4,5-tetrahydrodipicolinate. The Proton donor role is filled by Lys-154. 160-161 lines the (S)-2,3,4,5-tetrahydrodipicolinate pocket; it reads GT.

Belongs to the DapB family.

It is found in the cytoplasm. The catalysed reaction is (S)-2,3,4,5-tetrahydrodipicolinate + NAD(+) + H2O = (2S,4S)-4-hydroxy-2,3,4,5-tetrahydrodipicolinate + NADH + H(+). The enzyme catalyses (S)-2,3,4,5-tetrahydrodipicolinate + NADP(+) + H2O = (2S,4S)-4-hydroxy-2,3,4,5-tetrahydrodipicolinate + NADPH + H(+). It functions in the pathway amino-acid biosynthesis; L-lysine biosynthesis via DAP pathway; (S)-tetrahydrodipicolinate from L-aspartate: step 4/4. In terms of biological role, catalyzes the conversion of 4-hydroxy-tetrahydrodipicolinate (HTPA) to tetrahydrodipicolinate. In Limosilactobacillus fermentum (strain NBRC 3956 / LMG 18251) (Lactobacillus fermentum), this protein is 4-hydroxy-tetrahydrodipicolinate reductase.